The chain runs to 169 residues: Phycobiliprotein beta chain (169 aa).

N4-methylasparagine is present on Asn72. A (2R,3E)-phycocyanobilin-binding site is contributed by Cys82.

It belongs to the phycobiliprotein family. As to quaternary structure, heterodimer of an alpha and a beta chain. Contains one covalently linked bilin chromophore.

It is found in the cellular thylakoid membrane. Its function is as follows. Light-harvesting photosynthetic bile pigment-protein from the phycobiliprotein complex. This is a protein functionally equivalent to, but with weaker absorbance than, allophycocyanin beta chain. The sequence is that of Phycobiliprotein beta chain (apcD) from Mastigocladus laminosus (Fischerella sp.).